The sequence spans 307 residues: sn-1-specific diacylglycerol lipase ABHD11 (307 aa).

The transit peptide at 1–34 (MLRWARAWRVPRGVLGASSPRRLAVPVTFCSSRS) directs the protein to the mitochondrion. Lysine 79 carries the N6-succinyllysine modification. Residue serine 133 is the Charge relay system of the active site. Position 196 is an N6-succinyllysine (lysine 196). Residues aspartate 229 and histidine 288 each act as charge relay system in the active site.

Belongs to the AB hydrolase superfamily. Interacts with OGDH and DLST; this interaction maintains the functional lipoylation of the 2-oxoglutarate dehydrogenase complex. Phosphorylated. In terms of tissue distribution, expressed in white adipose tissues.

Its subcellular location is the mitochondrion. The protein localises to the mitochondrion matrix. The enzyme catalyses 1-octadecanoyl-2-(5Z,8Z,11Z,14Z-eicosatetraenoyl)-sn-glycerol + H2O = 2-(5Z,8Z,11Z,14Z-eicosatetraenoyl)-glycerol + octadecanoate + H(+). The catalysed reaction is a 1,2-diacyl-sn-glycerol + H2O = a 2-acylglycerol + a fatty acid + H(+). It catalyses the reaction a 1,3-diacyl-sn-glycerol + H2O = a 1-acyl-sn-glycerol + a fatty acid + H(+). It carries out the reaction 1-octadecanoyl-2-(9Z-octadecenoyl)-sn-glycerol + H2O = 2-(9Z-octadecenoyl)-glycerol + octadecanoate + H(+). The enzyme catalyses 1-octadecanoyl-2-(4Z,7Z,10Z,13Z,16Z,19Z-docosahexaenoyl)-sn-glycerol + H2O = 2-(4Z,7Z,10Z,13Z,16Z,19Z-docosahexaenoyl)-glycerol + octadecanoate + H(+). The catalysed reaction is 1,2-didecanoylglycerol + H2O = decanoylglycerol + decanoate + H(+). Functionally, catalyzes the hydrolysis of diacylglycerol in vitro and may function as a key regulator in lipid metabolism, namely by regulating the intracellular levels of diacylglycerol. 1,2-diacyl-sn-glycerols are the preferred substrate over 1,3-diacyl-sn-glycerols. The enzyme hydrolyzes stearate in preference to palmitate from the sn-1 position of 1,2-diacyl-sn-glycerols. Maintains the functional lipoylation of the 2-oxoglutarate dehydrogenase complex (OGDHc) through its interaction with the OGDHc by preventing the formation of lipoyl adducts. In addition, is also required for the expansion and differentiation of embryonic stem cells (ESCs). The protein is sn-1-specific diacylglycerol lipase ABHD11 of Mus musculus (Mouse).